Consider the following 317-residue polypeptide: Transmembrane and death domain protein 1 (317 aa).

Residues 1–27 (MAARTLASALVLTLWVWALAPAGAVDA) form the signal peptide. Residues 28 to 218 (MGPHAAVRLA…ERSPMGWAGP (191 aa)) are Extracellular-facing. A compositionally biased stretch (basic and acidic residues) spans 62–73 (ELSRLSEDRLAR). The disordered stretch occupies residues 62-106 (ELSRLSEDRLARPEPLNTTSGSPSRRRRREAAEDPAGRVAGPGEV). One can recognise a Death domain in the interval 66 to 150 (LSEDRLARPE…DVARELGKNL (85 aa)). Residue Asn-78 is glycosylated (N-linked (GlcNAc...) asparagine). Residues 219 to 239 (LALGLLTGFVGALGTGALVVL) form a helical membrane-spanning segment. Topologically, residues 240–317 (LTLWITGGDG…SWGSGALDGL (78 aa)) are cytoplasmic.

It localises to the membrane. In Homo sapiens (Human), this protein is Transmembrane and death domain protein 1.